Consider the following 60-residue polypeptide: MNFSKLFALVLLIGLVLLTGQTEAGGLKKLGKKLEGVGKRVFKASEKALPVLTGYKAIGK.

A signal peptide spans 1 to 24 (MNFSKLFALVLLIGLVLLTGQTEA). Position 58 is an isoleucine amide (Ile-58).

It belongs to the cecropin family.

The protein resides in the secreted. Its function is as follows. Cecropins have lytic and antibacterial activity against several Gram-positive and Gram-negative bacteria. The chain is Cecropin-B type 2 (CECB2) from Aedes albopictus (Asian tiger mosquito).